The following is a 101-amino-acid chain: MIPGELFIQDGEIELNAGRKTVTISVANTGDRPIQVGSHYHFFETNPALKFDRKKARGMRLDIAAGTAVRFEPGQTRDVQLVALAGKRMVYGFRGDVMGKL.

The protein belongs to the urease beta subunit family. In terms of assembly, heterotrimer of UreA (gamma), UreB (beta) and UreC (alpha) subunits. Three heterotrimers associate to form the active enzyme.

It localises to the cytoplasm. It carries out the reaction urea + 2 H2O + H(+) = hydrogencarbonate + 2 NH4(+). It functions in the pathway nitrogen metabolism; urea degradation; CO(2) and NH(3) from urea (urease route): step 1/1. The chain is Urease subunit beta from Bradyrhizobium sp. (strain ORS 278).